Reading from the N-terminus, the 403-residue chain is Tubby-like F-box protein 6 (403 aa).

The F-box domain occupies 50–105 (SCWAQLPPELLREVLVRIEESEVWWPSRRDVVACAGVCRSWRGITKEIVRVPEASG).

Belongs to the TUB family. As to expression, ubiquitous.

The polypeptide is Tubby-like F-box protein 6 (TULP6) (Oryza sativa subsp. japonica (Rice)).